A 303-amino-acid chain; its full sequence is UDP-N-acetylenolpyruvoylglucosamine reductase (303 aa).

In terms of domain architecture, FAD-binding PCMH-type spans 23-188; that stretch reads KVGGPADYLV…ISAKFALKPG (166 aa). Arg-167 is a catalytic residue. Ser-217 (proton donor) is an active-site residue. The active site involves Glu-287.

Belongs to the MurB family. Requires FAD as cofactor.

Its subcellular location is the cytoplasm. It carries out the reaction UDP-N-acetyl-alpha-D-muramate + NADP(+) = UDP-N-acetyl-3-O-(1-carboxyvinyl)-alpha-D-glucosamine + NADPH + H(+). Its pathway is cell wall biogenesis; peptidoglycan biosynthesis. Its function is as follows. Cell wall formation. The protein is UDP-N-acetylenolpyruvoylglucosamine reductase of Streptococcus uberis (strain ATCC BAA-854 / 0140J).